A 460-amino-acid polypeptide reads, in one-letter code: MFS-type transporter PUL3 (460 aa).

The next 8 membrane-spanning stretches (helical) occupy residues 16 to 36 (AVTL…SSVV), 50 to 70 (YLFI…FIIG), 81 to 101 (WVII…SCAG), 113 to 133 (IICG…TAIS), 151 to 171 (GICM…DFTV), 181 to 201 (APTF…MFVL), 240 to 260 (MFLS…FLTL), and 271 to 291 (VAFM…PDLV). The interval 300–323 (PSTQDETDTSDNDKIEKEESEQKS) is disordered. Residues 310–323 (DNDKIEKEESEQKS) show a composition bias toward basic and acidic residues. Helical transmembrane passes span 333 to 353 (VSLT…MIGA), 369 to 389 (IFFT…GSSV), 408 to 428 (FIGA…AALY), and 433 to 453 (GLPI…PSLV).

The protein belongs to the major facilitator superfamily. TCR/Tet family.

Its subcellular location is the cell membrane. MFS-type transporer required for the uptake of iron via the uptake of the siderophore pulcherrimin-iron complex. This Kluyveromyces lactis (strain ATCC 8585 / CBS 2359 / DSM 70799 / NBRC 1267 / NRRL Y-1140 / WM37) (Yeast) protein is MFS-type transporter PUL3.